The chain runs to 336 residues: Torsin-1B (336 aa).

The first 24 residues, 1-24 (MRRIGAFGGSTALWALLAAHVAGA), serve as a signal peptide directing secretion. An N-linked (GlcNAc...) asparagine glycan is attached at Asn-64. 109 to 116 (GWAGTGKN) is a binding site for ATP. Asn-165 is a glycosylation site (N-linked (GlcNAc...) asparagine).

It belongs to the ClpA/ClpB family. Torsin subfamily. In terms of assembly, homohexamer. Interacts with TOR1A; the interaction may be specific of neural tissues. Interacts with TOR1AIP1; TOR1AIP1 is required for TOR1B location on the nuclear membrane. Interacts (ATP-bound) with TOR1AIP2; important for endoplasmic reticulum integrity. In terms of processing, N-glycosylated. In terms of tissue distribution, highly expressed in liver and muscle; lower expression levels are observed in brain (at protein level).

The protein resides in the endoplasmic reticulum lumen. It localises to the nucleus membrane. It catalyses the reaction ATP + H2O = ADP + phosphate + H(+). In terms of biological role, may serve as a molecular chaperone assisting in the proper folding of secreted and/or membrane proteins. Plays a role in non-neural cells nuclear envelope and endoplasmic reticulum integrity. May have a redundant function with TOR1A in non-neural tissues. In Mus musculus (Mouse), this protein is Torsin-1B (Tor1b).